The following is a 643-amino-acid chain: DNA gyrase subunit B (643 aa).

The 115-residue stretch at 428–542 (SEIFLVEGDS…AGYVYIAQPP (115 aa)) folds into the Toprim domain. Mg(2+) is bound by residues E434, D507, and D509.

This sequence belongs to the type II topoisomerase GyrB family. As to quaternary structure, heterotetramer, composed of two GyrA and two GyrB chains. In the heterotetramer, GyrA contains the active site tyrosine that forms a transient covalent intermediate with DNA, while GyrB binds cofactors and catalyzes ATP hydrolysis. The cofactor is Mg(2+). Requires Mn(2+) as cofactor. Ca(2+) serves as cofactor.

It localises to the cytoplasm. It catalyses the reaction ATP-dependent breakage, passage and rejoining of double-stranded DNA.. A type II topoisomerase that negatively supercoils closed circular double-stranded (ds) DNA in an ATP-dependent manner to modulate DNA topology and maintain chromosomes in an underwound state. Negative supercoiling favors strand separation, and DNA replication, transcription, recombination and repair, all of which involve strand separation. Also able to catalyze the interconversion of other topological isomers of dsDNA rings, including catenanes and knotted rings. Type II topoisomerases break and join 2 DNA strands simultaneously in an ATP-dependent manner. The polypeptide is DNA gyrase subunit B (Staphylococcus epidermidis (strain ATCC 35984 / DSM 28319 / BCRC 17069 / CCUG 31568 / BM 3577 / RP62A)).